Reading from the N-terminus, the 183-residue chain is UPF0114 protein HI_0507 (183 aa).

3 helical membrane passes run 30–50, 68–88, and 150–170; these read LQVP…YKFI, IMLG…LVMV, and TMMW…ALAY.

Belongs to the UPF0114 family.

The protein localises to the cell membrane. The sequence is that of UPF0114 protein HI_0507 from Haemophilus influenzae (strain ATCC 51907 / DSM 11121 / KW20 / Rd).